Here is a 457-residue protein sequence, read N- to C-terminus: tRNA-2-methylthio-N(6)-dimethylallyladenosine synthase (457 aa).

Residues 3 to 120 (KKVYVKTFGC…LPQMIDARRA (118 aa)) form the MTTase N-terminal domain. [4Fe-4S] cluster-binding residues include cysteine 12, cysteine 49, cysteine 83, cysteine 157, cysteine 161, and cysteine 164. The region spanning 143-377 (RVEGPSAFVS…QATIEENVAR (235 aa)) is the Radical SAM core domain. The TRAM domain occupies 380–447 (QSMVGKVERI…PHSLRGELVL (68 aa)).

Belongs to the methylthiotransferase family. MiaB subfamily. Monomer. [4Fe-4S] cluster serves as cofactor.

It localises to the cytoplasm. The enzyme catalyses N(6)-dimethylallyladenosine(37) in tRNA + (sulfur carrier)-SH + AH2 + 2 S-adenosyl-L-methionine = 2-methylsulfanyl-N(6)-dimethylallyladenosine(37) in tRNA + (sulfur carrier)-H + 5'-deoxyadenosine + L-methionine + A + S-adenosyl-L-homocysteine + 2 H(+). Functionally, catalyzes the methylthiolation of N6-(dimethylallyl)adenosine (i(6)A), leading to the formation of 2-methylthio-N6-(dimethylallyl)adenosine (ms(2)i(6)A) at position 37 in tRNAs that read codons beginning with uridine. In Burkholderia cenocepacia (strain HI2424), this protein is tRNA-2-methylthio-N(6)-dimethylallyladenosine synthase.